A 398-amino-acid chain; its full sequence is MTQSVCILGVTGSIGRSTLKILGQHPDKYSVFAVSAHSRISELVEICKQFRPKVVVVPEQKIVELKTLFAQQNISDIDVLAGQEGLVDIASHTDVDIVMAAIVGAAGLLPTLAAVKAGKRVLLANKEALVMSGEIMMQAARDHQALLLPVDSEHNAIFQSLPHNYLQADRTGQPQLGVSKILLTASGGPFLNHSLEQLTHVTPQQACKHPNWSMGQKISVDSATLMNKGLELIEACHLFSISEHFVTVVVHPQSIIHSMVQYVDGSTLAQMGNPDMCTPIAHALAWPERLQTNVPALDLFEYSQLNFQAPDTQKFPALNLARQAMRAGGLAPTILNAANEIAVEAFLMERIGFTSIPQVVEHTLEKLENAAAESIECILDKDKVARSVAQQYISSIGG.

5 residues coordinate NADPH: T11, G12, S13, I14, and N125. K126 is a 1-deoxy-D-xylulose 5-phosphate binding site. E127 lines the NADPH pocket. Mn(2+) is bound at residue D151. 1-deoxy-D-xylulose 5-phosphate-binding residues include S152, E153, S186, and H209. E153 provides a ligand contact to Mn(2+). An NADPH-binding site is contributed by G215. 1-deoxy-D-xylulose 5-phosphate contacts are provided by S222, N227, K228, and E231. E231 is a binding site for Mn(2+).

This sequence belongs to the DXR family. Mg(2+) is required as a cofactor. Mn(2+) serves as cofactor.

It carries out the reaction 2-C-methyl-D-erythritol 4-phosphate + NADP(+) = 1-deoxy-D-xylulose 5-phosphate + NADPH + H(+). It functions in the pathway isoprenoid biosynthesis; isopentenyl diphosphate biosynthesis via DXP pathway; isopentenyl diphosphate from 1-deoxy-D-xylulose 5-phosphate: step 1/6. In terms of biological role, catalyzes the NADPH-dependent rearrangement and reduction of 1-deoxy-D-xylulose-5-phosphate (DXP) to 2-C-methyl-D-erythritol 4-phosphate (MEP). The chain is 1-deoxy-D-xylulose 5-phosphate reductoisomerase from Acinetobacter baumannii (strain ACICU).